Reading from the N-terminus, the 188-residue chain is Proline-rich protein 3 (188 aa).

The interval 1–157 (MPKRKKQNHH…DPQVMEDKSD (157 aa)) is disordered. Pro residues-rich tracts occupy residues 35–46 (IGPPSLLGPPPM) and 69–82 (LIPP…PPWG). The segment covering 83–96 (RGPIRRGLGPRSSP) has biased composition (low complexity). The segment covering 145–157 (PKDDPQVMEDKSD) has biased composition (basic and acidic residues). Residues 155–183 (KSDRPVCRHFAKKGHCRYEDLCAFYHPGV) form a C3H1-type zinc finger.

This is Proline-rich protein 3 (PRR3) from Homo sapiens (Human).